Reading from the N-terminus, the 345-residue chain is Protein-glutamate methylesterase/protein-glutamine glutaminase 1 (345 aa).

One can recognise a Response regulatory domain in the interval Ser-8–Glu-123. Asp-59 bears the 4-aspartylphosphate mark. One can recognise a CheB-type methylesterase domain in the interval Ala-151–Arg-344. Active-site residues include Ser-163, His-190, and Asp-286.

The protein belongs to the CheB family. Post-translationally, phosphorylated by CheA. Phosphorylation of the N-terminal regulatory domain activates the methylesterase activity.

It is found in the cytoplasm. It carries out the reaction [protein]-L-glutamate 5-O-methyl ester + H2O = L-glutamyl-[protein] + methanol + H(+). It catalyses the reaction L-glutaminyl-[protein] + H2O = L-glutamyl-[protein] + NH4(+). Its function is as follows. Involved in chemotaxis. Part of a chemotaxis signal transduction system that modulates chemotaxis in response to various stimuli. Catalyzes the demethylation of specific methylglutamate residues introduced into the chemoreceptors (methyl-accepting chemotaxis proteins or MCP) by CheR. Also mediates the irreversible deamidation of specific glutamine residues to glutamic acid. The chain is Protein-glutamate methylesterase/protein-glutamine glutaminase 1 from Myxococcus xanthus (strain DK1622).